Reading from the N-terminus, the 663-residue chain is Zeaxanthin epoxidase, chloroplastic (663 aa).

The transit peptide at 1–50 directs the protein to the chloroplast; that stretch reads MYSTVFYTSVHPSTSAFSRKQLPLLISKDFPTELYHSLPCSRSLENGQIK. FAD contacts are provided by residues 81–109 and 359–372; these read KVLV…LVFE and TFSW…LLGD. The region spanning 547–611 is the FHA domain; that stretch reads LVLSRDENMP…HGTWITDNEG (65 aa).

FAD serves as cofactor. As to expression, higher expression in leaves than in roots.

The protein resides in the plastid. It localises to the chloroplast membrane. It is found in the chloroplast thylakoid membrane. It carries out the reaction all-trans-zeaxanthin + 4 reduced [2Fe-2S]-[ferredoxin] + 2 O2 + 4 H(+) = all-trans-violaxanthin + 4 oxidized [2Fe-2S]-[ferredoxin] + 2 H2O. It participates in plant hormone biosynthesis; abscisate biosynthesis. Converts zeaxanthin into antheraxanthin and subsequently violaxanthin. Involved in the epoxidation of zeaxanthin. Plays an important role in resistance to stresses, seed development and dormancy. The chain is Zeaxanthin epoxidase, chloroplastic (ABA2) from Nicotiana plumbaginifolia (Leadwort-leaved tobacco).